The following is a 428-amino-acid chain: MFVDQVKVYVKGGDGGNGMVAFRREKYVPKGGPAGGDGGNGADVVFEVDEGLRTLMDFRYKRHFKADRGEHGMSKNQHGRNAEEMIVKVPPGTVVTDAETEQVLADLTEHGQRAVIAKGGRGGRGNSRFATPANPAPQLSENGEPGKERDVILELKVLADVGLVGFPSVGKSTLLSIVSSAKPKIADYHFTTLVPNLGVVETDDNRSFVMADLPGLIEGAHEGVGLGHQFLRHIERTRVIVHVIDMSALEGRDPYEDYVTINEELEQYNMRLTERPQIIVANKMDMPDAADNLAAFKEKLTDDYKVFPISAITREGLRELLFEIANQLETTPEFPLYNEEELSDNRVMYRFDEGDAPFEITRDPDGTFVITGKALERLFKMTDFSRDESVKRFSRQLRGMGVDDALRERGAQDGDIIRLLEFEFEFID.

Residues 1-158 (MFVDQVKVYV…RDVILELKVL (158 aa)) enclose the Obg domain. Residues 118 to 145 (KGGRGGRGNSRFATPANPAPQLSENGEP) form a disordered region. The OBG-type G domain maps to 159–329 (ADVGLVGFPS…LLFEIANQLE (171 aa)). Residues 165–172 (GFPSVGKS), 190–194 (FTTLV), 212–215 (DLPG), 282–285 (NKMD), and 310–312 (SAI) contribute to the GTP site. Positions 172 and 192 each coordinate Mg(2+). An OCT domain is found at 350–428 (RFDEGDAPFE…LLEFEFEFID (79 aa)).

Belongs to the TRAFAC class OBG-HflX-like GTPase superfamily. OBG GTPase family. Monomer. Requires Mg(2+) as cofactor.

It localises to the cytoplasm. Its function is as follows. An essential GTPase which binds GTP, GDP and possibly (p)ppGpp with moderate affinity, with high nucleotide exchange rates and a fairly low GTP hydrolysis rate. Plays a role in control of the cell cycle, stress response, ribosome biogenesis and in those bacteria that undergo differentiation, in morphogenesis control. This is GTPase Obg from Bacillus pumilus (strain SAFR-032).